Reading from the N-terminus, the 584-residue chain is AP-1-like transcription factor yap1 (584 aa).

Residues Leu-23–Leu-179 form a disordered region. A Bipartite nuclear localization signal motif is present at residues Gln-35–Ser-42. Over residues Gln-36–Pro-48 the composition is skewed to basic and acidic residues. Over residues Pro-52 to Asn-67 the composition is skewed to low complexity. Positions Lys-68–Gly-75 match the Bipartite nuclear localization signal motif. Residues Gly-79 to Phe-94 show a composition bias toward acidic residues. 2 stretches are compositionally biased toward basic and acidic residues: residues Ser-112–Ala-144 and Ala-170–Leu-179. Residues Ser-154–Tyr-217 form the bZIP domain. The segment at Lys-159–Lys-180 is basic motif. The interval Leu-182 to Leu-189 is leucine-zipper. The transcription activation 1 stretch occupies residues Gln-211–Asn-332. Disordered stretches follow at residues Ile-267–Asn-379 and Arg-418–Pro-441. The segment at Ser-284–Val-296 is n-CRD. Over residues Glu-300 to Gly-309 the composition is skewed to polar residues. Over residues Ser-336 to Ser-362 the composition is skewed to low complexity. 2 stretches are compositionally biased toward polar residues: residues Asn-363–Asn-379 and Glu-422–Gln-437. A transcription activation 2 region spans residues Lys-377–Asp-480. 3 disulfides stabilise this stretch: Cys-531-Cys-555, Cys-531-Cys-564, and Cys-555-Cys-564. A c-CRD region spans residues Cys-531–Cys-564. Residues Ile-549–Ser-556 carry the Nuclear export signal motif.

Belongs to the bZIP family. YAP subfamily. In terms of processing, depending on the oxidative stress inducing agent, yap1 can undergo two distinct conformational changes, both involving disulfide bond formation, and both masking the nuclear export signal, thus abolishing nuclear export.

It is found in the nucleus. Its subcellular location is the cytoplasm. Functionally, transcription activator involved in oxidative stress response and redox homeostasis. Regulates the transcription of genes encoding antioxidant enzymes and components of the cellular thiol-reducing pathways. May be involved in antifungal resistance to voriconazole. In Aspergillus flavus (strain ATCC 200026 / FGSC A1120 / IAM 13836 / NRRL 3357 / JCM 12722 / SRRC 167), this protein is AP-1-like transcription factor yap1.